We begin with the raw amino-acid sequence, 261 residues long: Succinate dehydrogenase [ubiquinone] iron-sulfur subunit, mitochondrial (261 aa).

The region spanning 31–122 (FKIYRWNPDT…DVKIYPLPHM (92 aa)) is the 2Fe-2S ferredoxin-type domain. Residues C82, C87, C90, and C102 each contribute to the [2Fe-2S] cluster site. The 4Fe-4S ferredoxin-type domain maps to 164-194 (DRKKLDGLYECILCACCSTACPSYWWNNEQY). [4Fe-4S] cluster contacts are provided by C174, C177, and C180. C184 lines the [3Fe-4S] cluster pocket. W189 provides a ligand contact to a ubiquinone. 2 residues coordinate [3Fe-4S] cluster: C231 and C237. A [4Fe-4S] cluster-binding site is contributed by C241.

This sequence belongs to the succinate dehydrogenase/fumarate reductase iron-sulfur protein family. As to quaternary structure, component of complex II composed of four subunits: a flavoprotein (FP), an iron-sulfur protein (IP), and a cytochrome b composed of a large and a small subunit. The cofactor is [2Fe-2S] cluster. [3Fe-4S] cluster is required as a cofactor. [4Fe-4S] cluster serves as cofactor.

It is found in the mitochondrion inner membrane. It catalyses the reaction a quinone + succinate = fumarate + a quinol. Its pathway is carbohydrate metabolism; tricarboxylic acid cycle; fumarate from succinate (eukaryal route): step 1/1. Iron-sulfur protein (IP) subunit of succinate dehydrogenase (SDH) that is involved in complex II of the mitochondrial electron transport chain and is responsible for transferring electrons from succinate to ubiquinone (coenzyme Q). The protein is Succinate dehydrogenase [ubiquinone] iron-sulfur subunit, mitochondrial (SDH2) of Eremothecium gossypii (strain ATCC 10895 / CBS 109.51 / FGSC 9923 / NRRL Y-1056) (Yeast).